Reading from the N-terminus, the 793-residue chain is Probable phosphoketolase 2 (793 aa).

The protein belongs to the XFP family. The cofactor is thiamine diphosphate.

The sequence is that of Probable phosphoketolase 2 from Nostoc sp. (strain PCC 7120 / SAG 25.82 / UTEX 2576).